The primary structure comprises 266 residues: Protein-ADP-ribose hydrolase (266 aa).

The Macro domain occupies 74–265; sequence TDLKDLKPIK…LYKEAFNRDA (192 aa). Residues Asp93, Ile94, and Asn107 each coordinate ADP-D-ribose. Zn(2+) is bound by residues Cys113, His118, and Cys120. Residues Cys120, Ile121, Asp122, Ser212, Thr213, Gly214, and Phe216 each contribute to the ADP-D-ribose site.

Belongs to the MacroD-type family. Zn-Macro subfamily. The cofactor is Zn(2+).

The catalysed reaction is 4-O-(ADP-D-ribosyl)-L-aspartyl-[protein] + H2O = L-aspartyl-[protein] + ADP-D-ribose + H(+). In terms of biological role, ADP-ribosylhydrolase that specifically reverses the SirTM-mediated mono-ADP-ribosylation at an asparatate residue of GcvH-L, by releasing ADP-ribose from the target protein. May play a role in the regulation of the response to host-induced oxidative stress. The chain is Protein-ADP-ribose hydrolase from Staphylococcus aureus (strain MSSA476).